Consider the following 296-residue polypeptide: 4-hydroxy-tetrahydrodipicolinate synthase (296 aa).

T49 provides a ligand contact to pyruvate. Catalysis depends on Y137, which acts as the Proton donor/acceptor. The active-site Schiff-base intermediate with substrate is K165. Residue I207 coordinates pyruvate.

Belongs to the DapA family. In terms of assembly, homotetramer; dimer of dimers.

It is found in the cytoplasm. The catalysed reaction is L-aspartate 4-semialdehyde + pyruvate = (2S,4S)-4-hydroxy-2,3,4,5-tetrahydrodipicolinate + H2O + H(+). Its pathway is amino-acid biosynthesis; L-lysine biosynthesis via DAP pathway; (S)-tetrahydrodipicolinate from L-aspartate: step 3/4. Catalyzes the condensation of (S)-aspartate-beta-semialdehyde [(S)-ASA] and pyruvate to 4-hydroxy-tetrahydrodipicolinate (HTPA). The chain is 4-hydroxy-tetrahydrodipicolinate synthase from Rhodopseudomonas palustris (strain BisA53).